We begin with the raw amino-acid sequence, 320 residues long: uncharacterized protein (320 aa).

Belongs to the NAD(P)-dependent epimerase/dehydratase family.

This is an uncharacterized protein from Staphylococcus saprophyticus subsp. saprophyticus (strain ATCC 15305 / DSM 20229 / NCIMB 8711 / NCTC 7292 / S-41).